We begin with the raw amino-acid sequence, 315 residues long: Kinetochore protein SPC25 homolog (315 aa).

N-acetylmethionine is present on M1. Positions 57–91 (TAQSQVELMNLKADLREAEDELVKVLAVKTRKEAR) form a coiled coil. The tract at residues 261–315 (APAISFSTDTNMSTPENKRSKVQVNRRQKRGSESPLLAPVSTSATRRSSRFKGKK) is disordered. Polar residues predominate over residues 266–275 (FSTDTNMSTP). Basic residues predominate over residues 280-289 (SKVQVNRRQK).

Belongs to the SPC25 family. Component of the NDC80 complex, which consists of NDC80, NUF2, SPC24 and SPC25.

It localises to the chromosome. Its subcellular location is the centromere. Its function is as follows. Acts as a component of the essential kinetochore-associated NDC80 complex, which is required for chromosome segregation and spindle checkpoint activity to ensure proper cell division. The sequence is that of Kinetochore protein SPC25 homolog from Arabidopsis thaliana (Mouse-ear cress).